A 238-amino-acid polypeptide reads, in one-letter code: Ribonuclease 3 (238 aa).

The RNase III domain maps to 11-136 (RARLEAAIGY…LIAAIYLDGG (126 aa)). Glu49 serves as a coordination point for Mg(2+). Asp53 is a catalytic residue. 2 residues coordinate Mg(2+): Asp122 and Glu125. Glu125 is an active-site residue. Residues 161–230 (DAKTELQEWA…AMKLLEREGV (70 aa)) form the DRBM domain. Residues 180-193 (YRTEDRSGPDHDPR) show a composition bias toward basic and acidic residues. The tract at residues 180–215 (YRTEDRSGPDHDPRFTVTVEVDGIDPETGVDRSKRG) is disordered.

This sequence belongs to the ribonuclease III family. As to quaternary structure, homodimer. It depends on Mg(2+) as a cofactor.

Its subcellular location is the cytoplasm. It catalyses the reaction Endonucleolytic cleavage to 5'-phosphomonoester.. Digests double-stranded RNA. Involved in the processing of primary rRNA transcript to yield the immediate precursors to the large and small rRNAs (23S and 16S). Processes some mRNAs, and tRNAs when they are encoded in the rRNA operon. Processes pre-crRNA and tracrRNA of type II CRISPR loci if present in the organism. The polypeptide is Ribonuclease 3 (Sinorhizobium medicae (strain WSM419) (Ensifer medicae)).